Reading from the N-terminus, the 93-residue chain is Small ribosomal subunit protein uS19 (93 aa).

The protein belongs to the universal ribosomal protein uS19 family.

Functionally, protein S19 forms a complex with S13 that binds strongly to the 16S ribosomal RNA. The polypeptide is Small ribosomal subunit protein uS19 (Ligilactobacillus salivarius (strain UCC118) (Lactobacillus salivarius)).